Consider the following 191-residue polypeptide: UPF0149 protein VC_2476 (191 aa).

The protein belongs to the UPF0149 family.

This Vibrio cholerae serotype O1 (strain ATCC 39315 / El Tor Inaba N16961) protein is UPF0149 protein VC_2476.